The primary structure comprises 226 residues: N-(5'-phosphoribosyl)anthranilate isomerase 2 (226 aa).

Belongs to the TrpF family.

It carries out the reaction N-(5-phospho-beta-D-ribosyl)anthranilate = 1-(2-carboxyphenylamino)-1-deoxy-D-ribulose 5-phosphate. It participates in amino-acid biosynthesis; L-tryptophan biosynthesis; L-tryptophan from chorismate: step 3/5. This Methanosarcina mazei (strain ATCC BAA-159 / DSM 3647 / Goe1 / Go1 / JCM 11833 / OCM 88) (Methanosarcina frisia) protein is N-(5'-phosphoribosyl)anthranilate isomerase 2 (trpF2).